We begin with the raw amino-acid sequence, 130 residues long: Small ribosomal subunit protein uS8 (130 aa).

This sequence belongs to the universal ribosomal protein uS8 family. Part of the 30S ribosomal subunit. Contacts proteins S5 and S12.

Functionally, one of the primary rRNA binding proteins, it binds directly to 16S rRNA central domain where it helps coordinate assembly of the platform of the 30S subunit. The protein is Small ribosomal subunit protein uS8 of Acidiphilium cryptum (strain JF-5).